An 801-amino-acid polypeptide reads, in one-letter code: Sucrose synthase isoform 2 (801 aa).

The segment at 271–748 (MIFNVVILSP…GLKRIQEKYT (478 aa)) is GT-B glycosyltransferase.

This sequence belongs to the glycosyltransferase 1 family. Plant sucrose synthase subfamily. As to quaternary structure, homotetramer. In terms of tissue distribution, exclusively expressed in flowers.

It carries out the reaction an NDP-alpha-D-glucose + D-fructose = a ribonucleoside 5'-diphosphate + sucrose + H(+). Its function is as follows. Sucrose-cleaving enzyme that provides UDP-glucose and fructose for various metabolic pathways. This Daucus carota (Wild carrot) protein is Sucrose synthase isoform 2.